Consider the following 135-residue polypeptide: UPF0201 protein TON_1346 (135 aa).

Belongs to the UPF0201 family.

In Thermococcus onnurineus (strain NA1), this protein is UPF0201 protein TON_1346.